Consider the following 334-residue polypeptide: MSQNRKDDHIKYALEQRPGYNSFDEMELVHRSLPKYDLAEIDLSTHFAGRDWEFPFYINAMTGGSQKGSQINEKLAQVAESCGLLFVTGSYSAALKNPSDTSYQVATGRPNLLLATNIGLDKPYQAAQQAVADLQPLFLQIHVNLMQELLMPEGEREFRSWRQHLTDYSQRLDLPLILKEVGFGMDRSTVEEARSLGIQTFDISGRGGTSFAYIENQRGGNRDYLNDWGQSTLQSLLALQPMRDEVELLASGGVRHPLDMIKALVLGAKAVGLSRAMLDLVKNYSVEEVIDIVEGWKSDLRLIMCALSCRNLQELKNVPYLLYGRLKEAQEQIK.

5–6 (RK) contacts substrate. Residues 60 to 62 (AMT), Ser-90, and Asn-117 contribute to the FMN site. Gln-147 is a substrate binding site. Position 148 (Glu-148) interacts with Mg(2+). FMN contacts are provided by residues Lys-179, Ser-204, Thr-209, 253–255 (GVR), and 274–275 (SR).

This sequence belongs to the IPP isomerase type 2 family. In terms of assembly, homooctamer. Dimer of tetramers. Requires FMN as cofactor. NADPH serves as cofactor. Mg(2+) is required as a cofactor.

It is found in the cytoplasm. The catalysed reaction is isopentenyl diphosphate = dimethylallyl diphosphate. Its function is as follows. Involved in the biosynthesis of isoprenoids. Catalyzes the 1,3-allylic rearrangement of the homoallylic substrate isopentenyl (IPP) to its allylic isomer, dimethylallyl diphosphate (DMAPP). The polypeptide is Isopentenyl-diphosphate delta-isomerase (Streptococcus gordonii (strain Challis / ATCC 35105 / BCRC 15272 / CH1 / DL1 / V288)).